Consider the following 200-residue polypeptide: Potassium-transporting ATPase KdpC subunit (200 aa).

The helical transmembrane segment at 9 to 31 threads the bilayer; the sequence is LVMLVALTALTGLVYPLAMTGVA. Residues 68–97 are disordered; the sequence is GRPSATTAPDPQDSSKTVPSPYNAANSMGA. Polar residues predominate over residues 71–96; that stretch reads SATTAPDPQDSSKTVPSPYNAANSMG.

This sequence belongs to the KdpC family. The system is composed of three essential subunits: KdpA, KdpB and KdpC.

The protein localises to the cell inner membrane. Its function is as follows. Part of the high-affinity ATP-driven potassium transport (or Kdp) system, which catalyzes the hydrolysis of ATP coupled with the electrogenic transport of potassium into the cytoplasm. This subunit acts as a catalytic chaperone that increases the ATP-binding affinity of the ATP-hydrolyzing subunit KdpB by the formation of a transient KdpB/KdpC/ATP ternary complex. The chain is Potassium-transporting ATPase KdpC subunit from Rhodopseudomonas palustris (strain BisA53).